Reading from the N-terminus, the 416-residue chain is Alpha-1-antiproteinase (416 aa).

Residues 1–24 (MALSITRGLLLLAALCCLAPISLA) form the signal peptide. Residues Asn-68, Asn-105, Asn-143, and Asn-269 are each glycosylated (N-linked (GlcNAc...) asparagine). The RCL stretch occupies residues 371–390 (GSTFLEAIPMSLPPDVEFNR). Ser-381 is subject to Phosphoserine.

Belongs to the serpin family. Interacts with CELA2A. Interacts with ERGIC3 and LMAN1/ERGIC53. Interacts with PRSS1/Trypsin. As to expression, plasma.

Its subcellular location is the secreted. Functionally, inhibitor of serine proteases. Its primary target is elastase, but it also has a moderate affinity for plasmin and thrombin. Inhibits trypsin, chymotrypsin and plasminogen activator. This is Alpha-1-antiproteinase (SERPINA1) from Bos taurus (Bovine).